The chain runs to 226 residues: UPF0111 protein HI_1603 (226 aa).

The protein belongs to the UPF0111 family.

The sequence is that of UPF0111 protein HI_1603 from Haemophilus influenzae (strain ATCC 51907 / DSM 11121 / KW20 / Rd).